We begin with the raw amino-acid sequence, 190 residues long: Glucose-6-phosphate isomerase (190 aa).

Fe cation is bound by residues His89, His91, Glu98, and His137.

The protein belongs to the archaeal-type GPI family. Homodimer. Fe cation serves as cofactor.

Its subcellular location is the cytoplasm. It catalyses the reaction alpha-D-glucose 6-phosphate = beta-D-fructose 6-phosphate. The protein operates within carbohydrate degradation; glycolysis; D-glyceraldehyde 3-phosphate and glycerone phosphate from D-glucose: step 2/4. Its activity is regulated as follows. Inhibited by mannose 6-phosphate, fructose 1-phosphate and fructose 1,6-bisphosphate. Its activity is also inhibited by Cobalt (II) ions &lt; EDTA &lt; nickel (II) ions &lt; zinc (II) ions &lt;&lt; cadmium (II) ions &lt; copper (II) ions. Sodium and potassium ions and manganese ions show little or no effect on activity. The chain is Glucose-6-phosphate isomerase (pgiA) from Thermococcus litoralis.